We begin with the raw amino-acid sequence, 1041 residues long: Probable rhamnogalacturonate lyase C (1041 aa).

An N-terminal signal peptide occupies residues 1 to 21; the sequence is MFASTLRKTFVFLGLATYSAA. N-linked (GlcNAc...) asparagine glycans are attached at residues asparagine 28, asparagine 94, asparagine 116, asparagine 142, asparagine 231, asparagine 283, asparagine 528, and asparagine 634. Positions 703-728 are disordered; it reads ISRPCPRKGGTRRRKKERKKEGKKQG. Basic residues predominate over residues 707–720; sequence CPRKGGTRRRKKER. N-linked (GlcNAc...) asparagine glycosylation is present at asparagine 864.

This sequence belongs to the polysaccharide lyase 4 family.

It is found in the secreted. It carries out the reaction Endotype eliminative cleavage of L-alpha-rhamnopyranosyl-(1-&gt;4)-alpha-D-galactopyranosyluronic acid bonds of rhamnogalacturonan I domains in ramified hairy regions of pectin leaving L-rhamnopyranose at the reducing end and 4-deoxy-4,5-unsaturated D-galactopyranosyluronic acid at the non-reducing end.. In terms of biological role, pectinolytic enzymes consist of four classes of enzymes: pectin lyase, polygalacturonase, pectin methylesterase and rhamnogalacturonase. Degrades the rhamnogalacturonan I (RG-I) backbone of pectin. The polypeptide is Probable rhamnogalacturonate lyase C (rglC) (Emericella nidulans (strain FGSC A4 / ATCC 38163 / CBS 112.46 / NRRL 194 / M139) (Aspergillus nidulans)).